The following is a 97-amino-acid chain: UPF0298 protein MGAS9429_Spy0329 (97 aa).

Belongs to the UPF0298 family.

The protein resides in the cytoplasm. This Streptococcus pyogenes serotype M12 (strain MGAS9429) protein is UPF0298 protein MGAS9429_Spy0329.